A 336-amino-acid polypeptide reads, in one-letter code: Small ribosomal subunit protein uS9m (336 aa).

A disordered region spans residues 32–81 (STTTTTTTTTTTTTSDEIPTTKPRFQSRFRRNQQPHQQQRSPYTSSQVTE). Positions 33-45 (TTTTTTTTTTTTT) are enriched in low complexity. Residues 65 to 81 (QPHQQQRSPYTSSQVTE) are compositionally biased toward polar residues.

The protein belongs to the universal ribosomal protein uS9 family. Component of the mitochondrial small ribosomal subunit (mt-SSU).

The protein resides in the mitochondrion. Component of the mitochondrial ribosome (mitoribosome), a dedicated translation machinery responsible for the synthesis of mitochondrial genome-encoded proteins, including at least some of the essential transmembrane subunits of the mitochondrial respiratory chain. The mitoribosomes are attached to the mitochondrial inner membrane and translation products are cotranslationally integrated into the membrane. This is Small ribosomal subunit protein uS9m (MRPS9) from Candida albicans (strain SC5314 / ATCC MYA-2876) (Yeast).